A 209-amino-acid polypeptide reads, in one-letter code: Probable GTP-binding protein EngB (209 aa).

Residues 22 to 198 form the EngB-type G domain; the sequence is TPLEIAFVGR…NRTVGSWFDA (177 aa). Residues serine 37 and threonine 59 each contribute to the Mg(2+) site.

Belongs to the TRAFAC class TrmE-Era-EngA-EngB-Septin-like GTPase superfamily. EngB GTPase family. Mg(2+) serves as cofactor.

Functionally, necessary for normal cell division and for the maintenance of normal septation. This Neisseria gonorrhoeae (strain ATCC 700825 / FA 1090) protein is Probable GTP-binding protein EngB.